The following is a 404-amino-acid chain: Phosphoglycerate kinase (404 aa).

Substrate is bound by residues 21–23 (DFN), arginine 36, 59–62 (HLGR), arginine 119, and arginine 162. ATP-binding positions include lysine 213, glycine 300, glutamate 331, and 360-363 (GGDS).

This sequence belongs to the phosphoglycerate kinase family. In terms of assembly, monomer.

Its subcellular location is the cytoplasm. It carries out the reaction (2R)-3-phosphoglycerate + ATP = (2R)-3-phospho-glyceroyl phosphate + ADP. Its pathway is carbohydrate degradation; glycolysis; pyruvate from D-glyceraldehyde 3-phosphate: step 2/5. The protein is Phosphoglycerate kinase of Oenococcus oeni (strain ATCC BAA-331 / PSU-1).